Here is a 241-residue protein sequence, read N- to C-terminus: Fatty acid metabolism regulator protein (241 aa).

The HTH gntR-type domain maps to 11 to 79 (QSPAALAEEY…HGKPTKVNNI (69 aa)). The H-T-H motif DNA-binding region spans 39 to 58 (ERDLADKIGVTRTTLREVLQ).

In terms of assembly, homodimer.

It localises to the cytoplasm. Functionally, multifunctional regulator of fatty acid metabolism. The polypeptide is Fatty acid metabolism regulator protein (Haemophilus influenzae (strain 86-028NP)).